Here is a 385-residue protein sequence, read N- to C-terminus: Alanine--glyoxylate aminotransferase 1 (385 aa).

Residue Lys-201 is modified to N6-(pyridoxal phosphate)lysine. Residue Arg-354 coordinates substrate.

This sequence belongs to the class-V pyridoxal-phosphate-dependent aminotransferase family. Homodimer. It depends on pyridoxal 5'-phosphate as a cofactor.

The catalysed reaction is glyoxylate + L-alanine = glycine + pyruvate. Its pathway is amino-acid biosynthesis; glycine biosynthesis; glycine from glyoxylate: step 1/1. Its function is as follows. Has alanine:glyoxylate aminotransferase activity. This Saccharomyces cerevisiae (strain ATCC 204508 / S288c) (Baker's yeast) protein is Alanine--glyoxylate aminotransferase 1.